We begin with the raw amino-acid sequence, 595 residues long: S-(+)-linalool synthase, chloroplastic (595 aa).

The transit peptide at 1-46 directs the protein to the chloroplast; it reads MVCHVFSSFSSSLIRVLEAPLLLPAASASSSSSSSPASRSGGRRRR. Over residues 27–40 the composition is skewed to low complexity; sequence SASSSSSSSPASRS. The interval 27 to 54 is disordered; that stretch reads SASSSSSSSPASRSGGRRRRAAHVRPSP. The (2E)-geranyl diphosphate site is built by Arg-309, Asp-346, Asp-350, Arg-487, and Asp-490. Mg(2+) is bound by residues Asp-346 and Asp-350. Positions 346–350 match the DDXXD motif motif; the sequence is DDIFD. Mg(2+)-binding residues include Asp-490, Ser-494, and Glu-498.

The protein belongs to the terpene synthase family. Tpsb subfamily. The cofactor is Mg(2+). Requires Mn(2+) as cofactor.

Its subcellular location is the plastid. It localises to the chloroplast. The enzyme catalyses (2E)-geranyl diphosphate + H2O = (S)-linalool + diphosphate. The protein operates within secondary metabolite biosynthesis; terpenoid biosynthesis. In terms of biological role, involved in monoterpene (C10) biosynthesis. The major product is S-(+)-linalool. Linalool production is induced by jasmonate in response to pathogen attack, it possesses antibacterial activity and is important for resistance to the bacterial blight pathogen Xanthomonas oryzae pv. oryzae (Xoo). Plants over-expressing linalool synthase display enhanced resistance to Xoo. This chain is S-(+)-linalool synthase, chloroplastic, found in Oryza sativa subsp. japonica (Rice).